The chain runs to 607 residues: MAEHKLRKRKTSRYDDEVIYAAKFLYLKKYTPKEIAEELGLNSRRPIYYWAEKYNWRNLLSESGIEELIALRIITLTERENKSDQEIKELEALIDKDIQYKKQRAATVAKVTAKSAVNSADVSGNERAFADSGDGDERKKKKRVKNDISHVTPEMCQPFIDSLFDYQKHIRSNKHHDVRNILKSRQIGATYYFSFEALEDAIFSGDNQIFLSASKRQAEIFKNYIVKMAREYFGVELTGNPIILSNGAELHFLSTNKNTSQGNSGHVYGDEYAWIRDFQRFDDVASAMATHEKWRETYFSTPSSKFHESYSFWSGDNWRDGDPKRKNVPFPTFAELRDGGRLCPDGQWRYVVTIEDALKGGADKLFNIEKLKQRYSKYAFNQLYMCIWIDDADSIFNVKQLLKCGVDIAKWKDFNPKADRPFGDREVWGGFDPAHSGDGASFVIIAPPALPGEKYRMLARYQWHGLSYVYQANQIRALYEKYNMTYIGIDATGVGYGVYELVKEFARRAATAIIYNPESKTGMVLKVHDLVEHGQIEWSESELDIVPSFLMIKHQSTKSGNTMTFTAERTVKTQHADVFFAICNAINKKSLSDKPRKRRRWSVLNEN.

To phage P2 protein P.

This chain is Probable terminase, ATPase subunit, found in Haemophilus phage HP1 (strain HP1c1) (Bacteriophage HP1).